The chain runs to 307 residues: Glutaminase (307 aa).

Substrate contacts are provided by serine 66, asparagine 116, glutamate 160, asparagine 167, tyrosine 191, tyrosine 243, and valine 261.

It belongs to the glutaminase family. Homotetramer.

It carries out the reaction L-glutamine + H2O = L-glutamate + NH4(+). The sequence is that of Glutaminase from Pseudoalteromonas translucida (strain TAC 125).